The chain runs to 131 residues: Holo-[acyl-carrier-protein] synthase (131 aa).

Mg(2+)-binding residues include D8 and E63.

It belongs to the P-Pant transferase superfamily. AcpS family. It depends on Mg(2+) as a cofactor.

The protein resides in the cytoplasm. It catalyses the reaction apo-[ACP] + CoA = holo-[ACP] + adenosine 3',5'-bisphosphate + H(+). Its function is as follows. Transfers the 4'-phosphopantetheine moiety from coenzyme A to a Ser of acyl-carrier-protein. This Shewanella piezotolerans (strain WP3 / JCM 13877) protein is Holo-[acyl-carrier-protein] synthase.